A 381-amino-acid polypeptide reads, in one-letter code: Acetylornithine deacetylase (381 aa).

H79 contributes to the Zn(2+) binding site. D81 is a catalytic residue. D111 contacts Zn(2+). E143 is a catalytic residue. Zn(2+) contacts are provided by E144, E168, and H354.

The protein belongs to the peptidase M20A family. ArgE subfamily. In terms of assembly, homodimer. It depends on Zn(2+) as a cofactor. Co(2+) serves as cofactor. Glutathione is required as a cofactor.

The protein localises to the cytoplasm. It carries out the reaction N(2)-acetyl-L-ornithine + H2O = L-ornithine + acetate. The protein operates within amino-acid biosynthesis; L-arginine biosynthesis; L-ornithine from N(2)-acetyl-L-ornithine (linear): step 1/1. Functionally, catalyzes the hydrolysis of the amide bond of N(2)-acetylated L-amino acids. Cleaves the acetyl group from N-acetyl-L-ornithine to form L-ornithine, an intermediate in L-arginine biosynthesis pathway, and a branchpoint in the synthesis of polyamines. This is Acetylornithine deacetylase from Buchnera aphidicola subsp. Acyrthosiphon pisum (strain Tuc7).